The chain runs to 237 residues: Uridylate kinase (237 aa).

Residue 11–14 (KLSG) coordinates ATP. Residue Gly53 participates in UMP binding. ATP is bound by residues Gly54 and Arg58. UMP is bound by residues Asp73 and 134–141 (TGNPFFTT). ATP-binding residues include Thr161, Tyr167, and Asp170.

This sequence belongs to the UMP kinase family. As to quaternary structure, homohexamer.

Its subcellular location is the cytoplasm. The enzyme catalyses UMP + ATP = UDP + ADP. The protein operates within pyrimidine metabolism; CTP biosynthesis via de novo pathway; UDP from UMP (UMPK route): step 1/1. Its activity is regulated as follows. Inhibited by UTP. In terms of biological role, catalyzes the reversible phosphorylation of UMP to UDP. The polypeptide is Uridylate kinase (Burkholderia thailandensis (strain ATCC 700388 / DSM 13276 / CCUG 48851 / CIP 106301 / E264)).